Here is a 155-residue protein sequence, read N- to C-terminus: Protein archease-like (155 aa).

Positions 26, 154, and 155 each coordinate Ca(2+).

It belongs to the archease family.

Component of the tRNA-splicing ligase complex required to facilitate the enzymatic turnover of catalytic subunit RtcB. The chain is Protein archease-like from Caenorhabditis briggsae.